A 341-amino-acid polypeptide reads, in one-letter code: MKTSKILNTAAICLLAMGFNGNNVSCTNLNGSQEPAAANPVVSTPGNDAQQAGTQQGGANSKSVPEQQPQQAAGETTATVVVKTLDVLRGELRGQREAFLSEIIKSDGPFTILQLVGYLRVVDTDLLLKVDSTKVDEAGKKVKAYLEKIGIRGDSVEAALDNLMIKVYEITKGTVESSAQGTDSEELKTLLLKFSEDLKAEQELHSEAKGGEALLSSMKTQHDELLKKFAALTPTFLTSEDISGYLTVPEYGAPMNAAKWKKVEGMIHGKLESSEVPANLKALVAELIELREQMMDLLYGPIGHHDCAAGSGQGSSPKKPSFAAVPSSLSAIVFGIIVSMF.

Residues 1–21 (MKTSKILNTAAICLLAMGFNG) form the signal peptide. Asparagine 23 and asparagine 30 each carry an N-linked (GlcNAc...) asparagine glycan. Cysteine 26 and cysteine 307 are joined by a disulfide. Residues 36-75 (AAANPVVSTPGNDAQQAGTQQGGANSKSVPEQQPQQAAGE) form a disordered region. Low complexity predominate over residues 49-59 (AQQAGTQQGGA). Polar residues predominate over residues 60–75 (NSKSVPEQQPQQAAGE). The GPI-anchor amidated serine moiety is linked to residue serine 311. Residues 312-341 (GQGSSPKKPSFAAVPSSLSAIVFGIIVSMF) constitute a propeptide, removed in mature form.

Post-translationally, the signal sequence is cleaved. Glycosylated. In terms of processing, palmitoylated. Post-translationally, not myristoylated.

It localises to the cell membrane. The protein localises to the secreted. It is found in the vesicle. In terms of biological role, binds to host erythrocytes. The chain is Adhesion protein Bd37 from Babesia divergens.